The primary structure comprises 166 residues: Large ribosomal subunit protein uL11 (166 aa).

An N5-methylarginine modification is found at arginine 67.

Belongs to the universal ribosomal protein uL11 family.

This Encephalitozoon cuniculi (strain GB-M1) (Microsporidian parasite) protein is Large ribosomal subunit protein uL11 (RPL12).